We begin with the raw amino-acid sequence, 439 residues long: Ribosomal protein uS12 methylthiotransferase RimO (439 aa).

Residues 5 to 117 (KKLHLISLGC…IDELIASKQS (113 aa)) enclose the MTTase N-terminal domain. [4Fe-4S] cluster-binding residues include Cys-14, Cys-48, Cys-80, Cys-149, Cys-153, and Cys-156. Residues 135–363 (TGSNYHAYIK…GEIAERSTLR (229 aa)) form the Radical SAM core domain. The region spanning 366-437 (EKMVGKTVEL…GMQLLATLIK (72 aa)) is the TRAM domain.

Belongs to the methylthiotransferase family. RimO subfamily. Requires [4Fe-4S] cluster as cofactor.

Its subcellular location is the cytoplasm. The enzyme catalyses L-aspartate(89)-[ribosomal protein uS12]-hydrogen + (sulfur carrier)-SH + AH2 + 2 S-adenosyl-L-methionine = 3-methylsulfanyl-L-aspartate(89)-[ribosomal protein uS12]-hydrogen + (sulfur carrier)-H + 5'-deoxyadenosine + L-methionine + A + S-adenosyl-L-homocysteine + 2 H(+). Its function is as follows. Catalyzes the methylthiolation of an aspartic acid residue of ribosomal protein uS12. In Sulfurovum sp. (strain NBC37-1), this protein is Ribosomal protein uS12 methylthiotransferase RimO.